We begin with the raw amino-acid sequence, 466 residues long: Ribosome biogenesis protein YTM1 (466 aa).

The ubiquitin-like (UBL) domain stretch occupies residues 11–99 (IKIKFFTNEE…EAFLTLEYTR (89 aa)). Residues 109-466 (SFNNDDWISS…QINKGSDIAK (358 aa)) form a sufficient for interaction with ERB1 and association with 66S pre-ribosomes region. 7 WD repeats span residues 124–163 (PTTK…EKQY), 165–203 (GHSA…IIDE), 219–258 (GHKA…MTSI), 296–336 (GHSE…CVDT), 338–377 (TTGY…TSDQ), 384–424 (GHTN…SLYT), and 431–466 (STNA…DIAK).

This sequence belongs to the WD repeat WDR12/YTM1 family. Component of the NOP7 complex, composed of ERB1, NOP7 and YTM1. The complex is held together by ERB1, which interacts with NOP7 via its N-terminal domain and with YTM1 via a high-affinity interaction between the seven-bladed beta-propeller domains of the 2 proteins. The NOP7 complex associates with the 66S pre-ribosome. Interacts (via UBL domain) with MDN1 (via VWFA/MIDAS domain).

The protein localises to the nucleus. It is found in the nucleolus. Its subcellular location is the nucleoplasm. In terms of biological role, component of the NOP7 complex, which is required for maturation of the 25S and 5.8S ribosomal RNAs and formation of the 60S ribosome. The polypeptide is Ribosome biogenesis protein YTM1 (Candida albicans (strain SC5314 / ATCC MYA-2876) (Yeast)).